The sequence spans 274 residues: Hydroxyethylthiazole kinase (274 aa).

Met-50 contacts substrate. 2 residues coordinate ATP: Arg-126 and Ser-171. Ala-200 serves as a coordination point for substrate.

It belongs to the Thz kinase family. Requires Mg(2+) as cofactor.

It catalyses the reaction 5-(2-hydroxyethyl)-4-methylthiazole + ATP = 4-methyl-5-(2-phosphooxyethyl)-thiazole + ADP + H(+). The protein operates within cofactor biosynthesis; thiamine diphosphate biosynthesis; 4-methyl-5-(2-phosphoethyl)-thiazole from 5-(2-hydroxyethyl)-4-methylthiazole: step 1/1. Catalyzes the phosphorylation of the hydroxyl group of 4-methyl-5-beta-hydroxyethylthiazole (THZ). This is Hydroxyethylthiazole kinase from Acinetobacter baylyi (strain ATCC 33305 / BD413 / ADP1).